Consider the following 66-residue polypeptide: SPbeta prophage-derived uncharacterized protein YosK (66 aa).

This chain is SPbeta prophage-derived uncharacterized protein YosK (yosK), found in Bacillus subtilis (strain 168).